Consider the following 229-residue polypeptide: Ribonuclease 3 (229 aa).

The 123-residue stretch at 5 to 127 (LSRLERKLGH…LIGAIYLDAG (123 aa)) folds into the RNase III domain. Mg(2+) is bound at residue Glu-40. Residue Asp-44 is part of the active site. 2 residues coordinate Mg(2+): Asp-113 and Glu-116. The active site involves Glu-116. Residues 154–224 (DPKTRLQEFL…AAAALIALGV (71 aa)) enclose the DRBM domain.

Belongs to the ribonuclease III family. Homodimer. It depends on Mg(2+) as a cofactor.

Its subcellular location is the cytoplasm. It carries out the reaction Endonucleolytic cleavage to 5'-phosphomonoester.. Its function is as follows. Digests double-stranded RNA. Involved in the processing of primary rRNA transcript to yield the immediate precursors to the large and small rRNAs (23S and 16S). Processes some mRNAs, and tRNAs when they are encoded in the rRNA operon. Processes pre-crRNA and tracrRNA of type II CRISPR loci if present in the organism. The protein is Ribonuclease 3 of Ectopseudomonas mendocina (strain ymp) (Pseudomonas mendocina).